The primary structure comprises 416 residues: Multifunctional CCA protein (416 aa).

The ATP site is built by Gly8 and Arg11. Residues Gly8 and Arg11 each contribute to the CTP site. Residues Glu21 and Asp23 each coordinate Mg(2+). ATP-binding residues include Arg91, Arg137, and Arg140. CTP contacts are provided by Arg91, Arg137, and Arg140. The HD domain occupies Thr228–Trp329.

Belongs to the tRNA nucleotidyltransferase/poly(A) polymerase family. Bacterial CCA-adding enzyme type 1 subfamily. Monomer. Can also form homodimers and oligomers. Mg(2+) is required as a cofactor. Ni(2+) serves as cofactor.

It carries out the reaction a tRNA precursor + 2 CTP + ATP = a tRNA with a 3' CCA end + 3 diphosphate. It catalyses the reaction a tRNA with a 3' CCA end + 2 CTP + ATP = a tRNA with a 3' CCACCA end + 3 diphosphate. Catalyzes the addition and repair of the essential 3'-terminal CCA sequence in tRNAs without using a nucleic acid template. Adds these three nucleotides in the order of C, C, and A to the tRNA nucleotide-73, using CTP and ATP as substrates and producing inorganic pyrophosphate. tRNA 3'-terminal CCA addition is required both for tRNA processing and repair. Also involved in tRNA surveillance by mediating tandem CCA addition to generate a CCACCA at the 3' terminus of unstable tRNAs. While stable tRNAs receive only 3'-terminal CCA, unstable tRNAs are marked with CCACCA and rapidly degraded. In Photorhabdus laumondii subsp. laumondii (strain DSM 15139 / CIP 105565 / TT01) (Photorhabdus luminescens subsp. laumondii), this protein is Multifunctional CCA protein.